The chain runs to 736 residues: Phosphoribosylformylglycinamidine synthase subunit PurL (736 aa).

Residue His-49 is part of the active site. Residues Tyr-52 and Lys-91 each contribute to the ATP site. Glu-93 contributes to the Mg(2+) binding site. Substrate is bound by residues 94–97 (SHNH) and Arg-116. Residue His-95 is the Proton acceptor of the active site. Asp-117 serves as a coordination point for Mg(2+). Gln-240 contacts substrate. Asp-268 contacts Mg(2+). A substrate-binding site is contributed by 312–314 (ESQ). The ATP site is built by Asp-493 and Gly-530. A Mg(2+)-binding site is contributed by Asn-531. Ser-533 serves as a coordination point for substrate.

The protein belongs to the FGAMS family. As to quaternary structure, monomer. Part of the FGAM synthase complex composed of 1 PurL, 1 PurQ and 2 PurS subunits.

Its subcellular location is the cytoplasm. It catalyses the reaction N(2)-formyl-N(1)-(5-phospho-beta-D-ribosyl)glycinamide + L-glutamine + ATP + H2O = 2-formamido-N(1)-(5-O-phospho-beta-D-ribosyl)acetamidine + L-glutamate + ADP + phosphate + H(+). It functions in the pathway purine metabolism; IMP biosynthesis via de novo pathway; 5-amino-1-(5-phospho-D-ribosyl)imidazole from N(2)-formyl-N(1)-(5-phospho-D-ribosyl)glycinamide: step 1/2. Its function is as follows. Part of the phosphoribosylformylglycinamidine synthase complex involved in the purines biosynthetic pathway. Catalyzes the ATP-dependent conversion of formylglycinamide ribonucleotide (FGAR) and glutamine to yield formylglycinamidine ribonucleotide (FGAM) and glutamate. The FGAM synthase complex is composed of three subunits. PurQ produces an ammonia molecule by converting glutamine to glutamate. PurL transfers the ammonia molecule to FGAR to form FGAM in an ATP-dependent manner. PurS interacts with PurQ and PurL and is thought to assist in the transfer of the ammonia molecule from PurQ to PurL. This chain is Phosphoribosylformylglycinamidine synthase subunit PurL, found in Rhodopseudomonas palustris (strain HaA2).